We begin with the raw amino-acid sequence, 188 residues long: UPF0200 protein M1627_1244 (188 aa).

Residue 15 to 22 (GMPGSGKS) participates in ATP binding.

It belongs to the UPF0200 family.

The chain is UPF0200 protein M1627_1244 from Saccharolobus islandicus (strain M.16.27) (Sulfolobus islandicus).